Reading from the N-terminus, the 431-residue chain is Histidine--tRNA ligase (431 aa).

The protein belongs to the class-II aminoacyl-tRNA synthetase family. Homodimer.

It is found in the cytoplasm. It catalyses the reaction tRNA(His) + L-histidine + ATP = L-histidyl-tRNA(His) + AMP + diphosphate + H(+). This is Histidine--tRNA ligase from Neisseria meningitidis serogroup A / serotype 4A (strain DSM 15465 / Z2491).